A 130-amino-acid polypeptide reads, in one-letter code: Ribonuclease P protein component (130 aa).

The protein belongs to the RnpA family. As to quaternary structure, consists of a catalytic RNA component (M1 or rnpB) and a protein subunit.

It carries out the reaction Endonucleolytic cleavage of RNA, removing 5'-extranucleotides from tRNA precursor.. Its function is as follows. RNaseP catalyzes the removal of the 5'-leader sequence from pre-tRNA to produce the mature 5'-terminus. It can also cleave other RNA substrates such as 4.5S RNA. The protein component plays an auxiliary but essential role in vivo by binding to the 5'-leader sequence and broadening the substrate specificity of the ribozyme. The polypeptide is Ribonuclease P protein component (Azotobacter vinelandii (strain DJ / ATCC BAA-1303)).